The sequence spans 230 residues: Ribosomal RNA small subunit methyltransferase G (230 aa).

S-adenosyl-L-methionine is bound by residues Gly91, Leu96, 142–143 (VE), and Arg161.

Belongs to the methyltransferase superfamily. RNA methyltransferase RsmG family.

The protein localises to the cytoplasm. It carries out the reaction guanosine(527) in 16S rRNA + S-adenosyl-L-methionine = N(7)-methylguanosine(527) in 16S rRNA + S-adenosyl-L-homocysteine. In terms of biological role, specifically methylates the N7 position of guanine in position 527 of 16S rRNA. This is Ribosomal RNA small subunit methyltransferase G from Burkholderia pseudomallei (strain K96243).